The chain runs to 304 residues: Acetyl-coenzyme A carboxylase carboxyl transferase subunit beta (304 aa).

The 270-residue stretch at Val26–Asn295 folds into the CoA carboxyltransferase N-terminal domain. Cys30, Cys33, Cys49, and Cys52 together coordinate Zn(2+). The segment at Cys30–Cys52 adopts a C4-type zinc-finger fold. Residues Ser281–Glu304 form a disordered region.

Belongs to the AccD/PCCB family. In terms of assembly, acetyl-CoA carboxylase is a heterohexamer composed of biotin carboxyl carrier protein (AccB), biotin carboxylase (AccC) and two subunits each of ACCase subunit alpha (AccA) and ACCase subunit beta (AccD). Requires Zn(2+) as cofactor.

The protein localises to the cytoplasm. The enzyme catalyses N(6)-carboxybiotinyl-L-lysyl-[protein] + acetyl-CoA = N(6)-biotinyl-L-lysyl-[protein] + malonyl-CoA. It functions in the pathway lipid metabolism; malonyl-CoA biosynthesis; malonyl-CoA from acetyl-CoA: step 1/1. Functionally, component of the acetyl coenzyme A carboxylase (ACC) complex. Biotin carboxylase (BC) catalyzes the carboxylation of biotin on its carrier protein (BCCP) and then the CO(2) group is transferred by the transcarboxylase to acetyl-CoA to form malonyl-CoA. This Pasteurella multocida (strain Pm70) protein is Acetyl-coenzyme A carboxylase carboxyl transferase subunit beta.